The following is a 345-amino-acid chain: Methionine import ATP-binding protein MetN 2 (345 aa).

Positions 4 to 243 (IELRHVKKEF…PQTEIAKRFI (240 aa)) constitute an ABC transporter domain. 40–47 (GYSGAGKS) contacts ATP.

Belongs to the ABC transporter superfamily. Methionine importer (TC 3.A.1.24) family. The complex is composed of two ATP-binding proteins (MetN), two transmembrane proteins (MetI) and a solute-binding protein (MetQ).

It is found in the cell membrane. It carries out the reaction L-methionine(out) + ATP + H2O = L-methionine(in) + ADP + phosphate + H(+). The catalysed reaction is D-methionine(out) + ATP + H2O = D-methionine(in) + ADP + phosphate + H(+). Functionally, part of the ABC transporter complex MetNIQ involved in methionine import. Responsible for energy coupling to the transport system. The sequence is that of Methionine import ATP-binding protein MetN 2 from Enterococcus faecalis (strain ATCC 700802 / V583).